The following is a 563-amino-acid chain: Methylcrotonoyl-CoA carboxylase beta chain, mitochondrial (563 aa).

The transit peptide at 1–22 (MWGALRSALRPCCRAAVPPQRA) directs the protein to the mitochondrion. In terms of domain architecture, CoA carboxyltransferase N-terminal spans 49 to 306 (MKALVSQLHE…QKKMDVTIEP (258 aa)). Residues 49 to 555 (MKALVSQLHE…SAALNAPIQR (507 aa)) form a carboxyltransferase region. An N6-acetyllysine; alternate modification is found at lysine 70. N6-succinyllysine; alternate is present on lysine 70. Position 141 is an N6-succinyllysine (lysine 141). The CoA carboxyltransferase C-terminal domain maps to 309 to 555 (EPLFPADELY…SAALNAPIQR (247 aa)). The acyl-CoA binding stretch occupies residues 343 to 372 (RFNEFKALYGDTLVTGFARIFGYPVGIIGN). Lysine 433 is subject to N6-succinyllysine. At lysine 495 the chain carries N6-acetyllysine; alternate. Lysine 495 is subject to N6-succinyllysine; alternate. Lysine 511 is subject to N6-acetyllysine.

This sequence belongs to the AccD/PCCB family. As to quaternary structure, probably a dodecamer composed of six biotin-containing alpha subunits (MCCC1) and six beta (MCCC2) subunits.

Its subcellular location is the mitochondrion matrix. The catalysed reaction is 3-methylbut-2-enoyl-CoA + hydrogencarbonate + ATP = 3-methyl-(2E)-glutaconyl-CoA + ADP + phosphate + H(+). The protein operates within amino-acid degradation; L-leucine degradation; (S)-3-hydroxy-3-methylglutaryl-CoA from 3-isovaleryl-CoA: step 2/3. Carboxyltransferase subunit of the 3-methylcrotonyl-CoA carboxylase, an enzyme that catalyzes the conversion of 3-methylcrotonyl-CoA to 3-methylglutaconyl-CoA, a critical step for leucine and isovaleric acid catabolism. This chain is Methylcrotonoyl-CoA carboxylase beta chain, mitochondrial (Mccc2), found in Mus musculus (Mouse).